Reading from the N-terminus, the 215-residue chain is 3-isopropylmalate dehydratase small subunit (215 aa).

The protein belongs to the LeuD family. LeuD type 1 subfamily. In terms of assembly, heterodimer of LeuC and LeuD.

The catalysed reaction is (2R,3S)-3-isopropylmalate = (2S)-2-isopropylmalate. It functions in the pathway amino-acid biosynthesis; L-leucine biosynthesis; L-leucine from 3-methyl-2-oxobutanoate: step 2/4. Catalyzes the isomerization between 2-isopropylmalate and 3-isopropylmalate, via the formation of 2-isopropylmaleate. The sequence is that of 3-isopropylmalate dehydratase small subunit from Marinobacter nauticus (strain ATCC 700491 / DSM 11845 / VT8) (Marinobacter aquaeolei).